A 326-amino-acid polypeptide reads, in one-letter code: Tetraacyldisaccharide 4'-kinase (326 aa).

55–62 is a binding site for ATP; it reads TAGGNGKT.

It belongs to the LpxK family.

The catalysed reaction is a lipid A disaccharide + ATP = a lipid IVA + ADP + H(+). Its pathway is glycolipid biosynthesis; lipid IV(A) biosynthesis; lipid IV(A) from (3R)-3-hydroxytetradecanoyl-[acyl-carrier-protein] and UDP-N-acetyl-alpha-D-glucosamine: step 6/6. Transfers the gamma-phosphate of ATP to the 4'-position of a tetraacyldisaccharide 1-phosphate intermediate (termed DS-1-P) to form tetraacyldisaccharide 1,4'-bis-phosphate (lipid IVA). This chain is Tetraacyldisaccharide 4'-kinase, found in Erwinia tasmaniensis (strain DSM 17950 / CFBP 7177 / CIP 109463 / NCPPB 4357 / Et1/99).